The following is a 247-amino-acid chain: Chaperone protein AfaB (247 aa).

The signal sequence occupies residues 1–29 (MKMRAVAVFTGMLTGVLSVAGLLSAGAYA).

Belongs to the periplasmic pilus chaperone family.

It is found in the periplasm. Functionally, involved in the biogenesis of the AFA-III afimbrial adhesin. The protein is Chaperone protein AfaB (afaB) of Escherichia coli.